We begin with the raw amino-acid sequence, 207 residues long: Hepatic lectin (207 aa).

M1 is subject to N-acetylmethionine. The Cytoplasmic portion of the chain corresponds to M1–R23. A helical; Signal-anchor for type II membrane protein membrane pass occupies residues S24–A48. Over R49–K207 the chain is Extracellular. N67 is a glycosylation site (N-linked (GlcNAc...) asparagine). Residues P77–K203 enclose the C-type lectin domain. 3 cysteine pairs are disulfide-bonded: C78-C92, C109-C201, and C179-C193.

Post-translationally, some or all of the cysteines are involved in disulfide bonds.

It localises to the membrane. Functionally, hepatic lectin is a membrane receptor protein that recognizes and binds exposed N-acetylglucosamine moieties of plasma glycoproteins, thus mediating their clearance (from the circulation) and endocytosis. The protein is Hepatic lectin of Gallus gallus (Chicken).